A 1850-amino-acid polypeptide reads, in one-letter code: Vitellogenin-2 (1850 aa).

The N-terminal stretch at 1 to 15 (MRGIILALVLTLVGS) is a signal peptide. Residues 24-662 (FNSRRSYLYN…SPRTMFPSAI (639 aa)) enclose the Vitellogenin domain. N-linked (GlcNAc...) asparagine glycosylation is present at Asn-604. Positions 935–984 (DAPLDVTEEPFQTSERASREHFAMQGPDSMPRKQSHSSREDLRRSTGKRA) are disordered. N-linked (GlcNAc...) asparagine glycosylation occurs at Asn-1094. 2 disordered regions span residues 1115-1313 (GTEP…SSSS) and 1338-1362 (EFPK…SHDT). Over residues 1122–1143 (TSSSSSSASSTATSSSSSSASS) the composition is skewed to low complexity. The span at 1156 to 1165 (DQVKQARNKD) shows a compositional bias: basic and acidic residues. The segment covering 1167–1266 (SSSSRSSKSS…SRSSSSSSKS (100 aa)) has biased composition (low complexity). N-linked (GlcNAc...) asparagine glycosylation is found at Asn-1177 and Asn-1188. Residues 1267–1277 (SSHHSHSHHSG) are compositionally biased toward basic residues. Residues 1278 to 1291 (HLNGSSSSSSSSRS) show a composition bias toward low complexity. The N-linked (GlcNAc...) asparagine glycan is linked to Asn-1280. The segment covering 1338–1350 (EFPKRKLPGDRAT) has biased composition (basic and acidic residues). 3 N-linked (GlcNAc...) asparagine glycosylation sites follow: Asn-1417, Asn-1597, and Asn-1665. The VWFD domain occupies 1579-1756 (ARCSVSYNKI…SWILEEAPCR (178 aa)). 2 disulfides stabilise this stretch: Cys-1581-Cys-1719 and Cys-1604-Cys-1755.

In terms of processing, phosvitin, an egg yolk storage protein, is one of the most highly phosphorylated (10%) proteins in nature. Post-translationally, cathepsin D is responsible for intraoocytic processing of vitellogenin. May contain intrachain disulfide bonds. After incorporation from serum via a specific receptor, it is cleaved into four fragments, heavy and light chain lipovitellins, phosphovitin and YGP40, and YGP40 is released into the yolk plasma before or during compartmentation of lipovitellin-phosvitin complex into the yolk granule.

Functionally, precursor of the major egg-yolk proteins that are sources of nutrients during early development of oviparous organisms. Its function is as follows. Phosvitin is believed to be of importance in sequestering calcium, iron and other cations for the developing embryo. This Gallus gallus (Chicken) protein is Vitellogenin-2 (VTG2).